A 170-amino-acid polypeptide reads, in one-letter code: Acireductone dioxygenase (170 aa).

Positions 99, 101, 105, and 144 each coordinate Fe(2+). Positions 99, 101, 105, and 144 each coordinate Ni(2+).

This sequence belongs to the acireductone dioxygenase (ARD) family. Monomer. The cofactor is Fe(2+). It depends on Ni(2+) as a cofactor.

The enzyme catalyses 1,2-dihydroxy-5-(methylsulfanyl)pent-1-en-3-one + O2 = 3-(methylsulfanyl)propanoate + CO + formate + 2 H(+). It catalyses the reaction 1,2-dihydroxy-5-(methylsulfanyl)pent-1-en-3-one + O2 = 4-methylsulfanyl-2-oxobutanoate + formate + 2 H(+). It participates in amino-acid biosynthesis; L-methionine biosynthesis via salvage pathway; L-methionine from S-methyl-5-thio-alpha-D-ribose 1-phosphate: step 5/6. Functionally, catalyzes 2 different reactions between oxygen and the acireductone 1,2-dihydroxy-3-keto-5-methylthiopentene (DHK-MTPene) depending upon the metal bound in the active site. Fe-containing acireductone dioxygenase (Fe-ARD) produces formate and 2-keto-4-methylthiobutyrate (KMTB), the alpha-ketoacid precursor of methionine in the methionine recycle pathway. Ni-containing acireductone dioxygenase (Ni-ARD) produces methylthiopropionate, carbon monoxide and formate, and does not lie on the methionine recycle pathway. The sequence is that of Acireductone dioxygenase from Bacillus cereus (strain ATCC 10987 / NRS 248).